The sequence spans 345 residues: uncharacterized protein (345 aa).

Residues 1-198 form the CNNM transmembrane domain; that stretch reads MDVLSAVLLA…LSEGLLDHEE (198 aa). The next 2 helical transmembrane spans lie at 3-23 and 95-115; these read VLSA…FVGA and VPPA…HVLL. 2 CBS domains span residues 217-280 and 285-342; these read AVPL…PQTV and VVRP…MRDG. Residues 312-332 traverse the membrane as a helical segment; the sequence is LALVTADNGSVVGMVALEDVV.

The protein belongs to the TerC family.

It localises to the cell membrane. This is an uncharacterized protein from Mycobacterium tuberculosis (strain ATCC 25618 / H37Rv).